Consider the following 359-residue polypeptide: UDP-3-O-acylglucosamine N-acyltransferase (359 aa).

His-256 (proton acceptor) is an active-site residue.

This sequence belongs to the transferase hexapeptide repeat family. LpxD subfamily. In terms of assembly, homotrimer.

It carries out the reaction a UDP-3-O-[(3R)-3-hydroxyacyl]-alpha-D-glucosamine + a (3R)-hydroxyacyl-[ACP] = a UDP-2-N,3-O-bis[(3R)-3-hydroxyacyl]-alpha-D-glucosamine + holo-[ACP] + H(+). It participates in bacterial outer membrane biogenesis; LPS lipid A biosynthesis. Functionally, catalyzes the N-acylation of UDP-3-O-acylglucosamine using 3-hydroxyacyl-ACP as the acyl donor. Is involved in the biosynthesis of lipid A, a phosphorylated glycolipid that anchors the lipopolysaccharide to the outer membrane of the cell. In Rhodopseudomonas palustris (strain HaA2), this protein is UDP-3-O-acylglucosamine N-acyltransferase.